Here is a 415-residue protein sequence, read N- to C-terminus: Metal tolerance protein 5 (415 aa).

The Cytoplasmic segment spans residues 1–124 (MAAAVAGGGE…REKVARSETL (124 aa)). A helical transmembrane segment spans residues 125-145 (AIRLSNIANMVLFAAKVYASV). At 146–150 (RSGSL) the chain is on the vacuolar side. The helical transmembrane segment at 151–171 (AIIASTLDSLLDLLSGFILWF) threads the bilayer. The Cytoplasmic segment spans residues 172 to 192 (TAFSMQTPNPYRYPIGKKRMQ). A helical transmembrane segment spans residues 193–213 (PLGILVFASVMATLGLQIILE). The Vacuolar segment spans residues 214-232 (SVRSLLSDGDEFSLTKEQE). The chain crosses the membrane as a helical span at residues 233–253 (KWVVDIMLAVTLVKLALVLYC). Residues 254-268 (RTFTNEIVKAYAQDH) lie on the Cytoplasmic side of the membrane. Residues 269-291 (FFDVITNMIGLVAALLATYIEGW) form a helical membrane-spanning segment. The Vacuolar portion of the chain corresponds to 292 to 293 (ID). Residues 294–313 (PVGAIILAIYTIRTWSMTVL) form a helical membrane-spanning segment. Topologically, residues 314 to 415 (ENVHSLVGQS…RPEHALSHEK (102 aa)) are cytoplasmic.

This sequence belongs to the cation diffusion facilitator (CDF) transporter (TC 2.A.4) family. SLC30A subfamily.

It is found in the vacuole membrane. In terms of biological role, involved in sequestration of excess metal in the cytoplasm into vacuoles to maintain metal homeostasis. The sequence is that of Metal tolerance protein 5 (MTP5) from Oryza sativa subsp. japonica (Rice).